The sequence spans 364 residues: Methylthioribose-1-phosphate isomerase (364 aa).

Residues 53-55 (RGA), R90, and Q203 each bind substrate. The Proton donor role is filled by D244. 254 to 255 (NK) lines the substrate pocket.

It belongs to the eIF-2B alpha/beta/delta subunits family. MtnA subfamily.

It carries out the reaction 5-(methylsulfanyl)-alpha-D-ribose 1-phosphate = 5-(methylsulfanyl)-D-ribulose 1-phosphate. The protein operates within amino-acid biosynthesis; L-methionine biosynthesis via salvage pathway; L-methionine from S-methyl-5-thio-alpha-D-ribose 1-phosphate: step 1/6. Its function is as follows. Catalyzes the interconversion of methylthioribose-1-phosphate (MTR-1-P) into methylthioribulose-1-phosphate (MTRu-1-P). This is Methylthioribose-1-phosphate isomerase from Sinorhizobium medicae (strain WSM419) (Ensifer medicae).